Here is a 453-residue protein sequence, read N- to C-terminus: Tyrosine-protein phosphatase non-receptor type 18 (453 aa).

The Tyrosine-protein phosphatase domain maps to 26–291 (LAREFSDIKA…RFLYHTVAQL (266 aa)). Residues aspartate 197, 229 to 235 (CSAGCGR), and glutamine 276 each bind substrate. The active-site Phosphocysteine intermediate is the cysteine 229. Phosphotyrosine is present on residues tyrosine 381 and tyrosine 419. The tract at residues 384-453 (VAPRAQRPVA…RDPPAEWTRV (70 aa)) is disordered. The span at 442–453 (GPRDPPAEWTRV) shows a compositional bias: basic and acidic residues.

The protein belongs to the protein-tyrosine phosphatase family. Non-receptor class 4 subfamily. In terms of assembly, interacts with PSTPIP1. Highest expression in bone marrow. Also expressed in kidney, lung, ovary, spleen, thymus and lymph node.

The protein localises to the nucleus. The protein resides in the cytoplasm. It catalyses the reaction O-phospho-L-tyrosyl-[protein] + H2O = L-tyrosyl-[protein] + phosphate. May be involved in growth and differentiation of hematopoietic cells. In Mus musculus (Mouse), this protein is Tyrosine-protein phosphatase non-receptor type 18 (Ptpn18).